Reading from the N-terminus, the 149-residue chain is Oligosaccharyltransferase complex subunit OSTC (149 aa).

Topologically, residues 1–32 are cytoplasmic; it reads MESLYRVPFLVLECPNLKLKKPPWVHMPSAMT. A helical membrane pass occupies residues 33–53; it reads VYALVVVSYFLITGGIIYDVI. Over 54-83 the chain is Extracellular; sequence VEPPSVGSVTDEHGHQRPVAFLAYRVNGQY. The chain crosses the membrane as a helical span at residues 84 to 104; it reads IMEGLASSFLFTMGGLGFIIL. Residues 105–117 are Cytoplasmic-facing; that stretch reads DRSNAPNIPKLNR. The helical transmembrane segment at 118-138 threads the bilayer; that stretch reads FLLLFIGFVCVLLSFFMARVF. The Extracellular segment spans residues 139-149; sequence MRMKLPGYLMG.

Belongs to the OSTC family. In terms of assembly, component of STT3A-containing oligosaccharyl transferase (OST-A) complex. STT3A-containing complex assembly occurs through the formation of 3 subcomplexes. Subcomplex 1 contains RPN1 and TMEM258, subcomplex 2 contains the STT3A-specific subunits STT3A, DC2/OSTC, and KCP2 as well as the core subunit OST4, and subcomplex 3 contains RPN2, DAD1, and OST48. The OST-A complex can form stable complexes with the Sec61 complex or with both the Sec61 and TRAP complexes. Interacts with PSEN1 and NCSTN; indicative for an association with the gamma-secretase complex.

It is found in the endoplasmic reticulum. The protein localises to the membrane. Its pathway is protein modification; protein glycosylation. Subunit of STT3A-containing oligosaccharyl transferase (OST-A) complex that catalyzes the initial transfer of a defined glycan (Glc(3)Man(9)GlcNAc(2) in eukaryotes) from the lipid carrier dolichol-pyrophosphate to an asparagine residue within an Asn-X-Ser/Thr consensus motif in nascent polypeptide chains, the first step in protein N-glycosylation. N-glycosylation occurs cotranslationally and the complex associates with the Sec61 complex at the channel-forming translocon complex that mediates protein translocation across the endoplasmic reticulum (ER). Within the OST-A complex, acts as an adapter that anchors the OST-A complex to the Sec61 complex. May be involved in N-glycosylation of APP (amyloid-beta precursor protein). Can modulate gamma-secretase cleavage of APP by enhancing endoprotelysis of PSEN1. The polypeptide is Oligosaccharyltransferase complex subunit OSTC (Bos taurus (Bovine)).